Here is a 288-residue protein sequence, read N- to C-terminus: Chemotaxis protein methyltransferase 2 (288 aa).

One can recognise a CheR-type methyltransferase domain in the interval Met-1–Lys-280. Residues Asn-76, Thr-78, Arg-82, Glu-119, Asp-145, Asn-200–Leu-201, and Arg-219–Asn-220 each bind S-adenosyl-L-methionine.

The enzyme catalyses L-glutamyl-[protein] + S-adenosyl-L-methionine = [protein]-L-glutamate 5-O-methyl ester + S-adenosyl-L-homocysteine. In terms of biological role, methylation of the membrane-bound methyl-accepting chemotaxis proteins (MCP) to form gamma-glutamyl methyl ester residues in MCP. This chain is Chemotaxis protein methyltransferase 2 (cheR2), found in Vibrio cholerae serotype O1 (strain ATCC 39315 / El Tor Inaba N16961).